We begin with the raw amino-acid sequence, 641 residues long: MATAAGMGIGAACLVAPQVRPGRRLRLQRVRRRCVAELSRDGGSAQRPLAPAPLVKQPVLPTFLVPTSTPPAPTQSPAPAPTPPPLPDSGVGEIEPDLEGLTEDSIDKTIFVASEQESEIMDVKEQAQAKVTRSVVFVTGEASPYAKSGGLGDVCGSLPIALALRGHRVMVVMPRYMNGALNKNFANAFYTEKHIKIPCFGGEHEVTFFHEYRDSVDWVFVDHPSYHRPGNLYGDNFGAFGDNQFRYTLLCYAACEAPLILELGGYIYGQKCMFVVNDWHASLVPVLLAAKYRPYGVYRDARSVLVIHNLAHQGVEPASTYPDLGLPPEWYGALEWVFPEWARRHALDKGEAVNFLKGAVVTADRIVTVSQGYSWEVTTAEGGQGLNELLSSRKSVLNGIVNGIDINDWNPSTDKFLPYHYSVDDLSGKAKCKAELQKELGLPIRPDVPLIGFIGRLDYQKGIDLIKLAIPDLMRDNIQFVMLGSGDPGFEGWMRSTESGYRDKFRGWVGFSVPVSHRITAGCDILLMPSRFEPCGLNQLYAMQYGTVPVVHGTGGLRDTVENFNPFAEKGEQGTGWAFSPLTIEKMLWALRMAISTYREHKSSWEGLMKRGMSSDFTWDHAASQYEQIFEWAFMDQPYVM.

A chloroplast-targeting transit peptide spans 1–113 (MATAAGMGIG…DSIDKTIFVA (113 aa)). Residues 62-96 (TFLVPTSTPPAPTQSPAPAPTPPPLPDSGVGEIEP) are disordered. A compositionally biased stretch (pro residues) spans 68 to 87 (STPPAPTQSPAPAPTPPPLP). Residue Lys-147 coordinates ADP-alpha-D-glucose.

This sequence belongs to the glycosyltransferase 1 family. Bacterial/plant glycogen synthase subfamily. As to expression, leaves and immature seeds.

Its subcellular location is the plastid. It localises to the chloroplast. The protein localises to the amyloplast. It carries out the reaction [(1-&gt;4)-alpha-D-glucosyl](n) + ADP-alpha-D-glucose = [(1-&gt;4)-alpha-D-glucosyl](n+1) + ADP + H(+). Its pathway is glycan biosynthesis; starch biosynthesis. Its function is as follows. Involved in starch synthesis in endosperm amyloplasts. Plays a role in the elongation of amylopectin chains. Synthesizes preferentially amylopectin chains with a degree of polymerization (DP) of 7 to 11 by elongating chains with a DP of 4 to 7. Generates distincly chains with a DP of 8 to 12 chains from short chains with a DP of 6 to 7. This chain is Soluble starch synthase 1, chloroplastic/amyloplastic, found in Oryza sativa subsp. japonica (Rice).